Here is a 465-residue protein sequence, read N- to C-terminus: Probable spore coat protein DDB_G0283555 (465 aa).

Positions 1 to 22 are cleaved as a signal peptide; that stretch reads MRINNLLVCLVLVFSTLSISNA. The DSCP-N domain occupies 35-153; sequence RNCDSLSEDQ…RYPVCKGGGG (119 aa). 7 consecutive Follistatin-like domains span residues 160–182, 195–217, 229–251, 257–280, 287–309, 318–340, and 435–458; these read PCKN…AYCV, LCKA…ACCV, LCDA…ANCV, ECEH…PHCQ, LCRN…PTCI, PCRD…PSCV, and LCEF…PVCL.

May contribute to the structure of the coat at the interface between the middle, cellulosic layer and the outer, electron-dense, proteinaceous layer. The protein is Probable spore coat protein DDB_G0283555 of Dictyostelium discoideum (Social amoeba).